The following is a 37-amino-acid chain: Cytochrome b6-f complex subunit 5 (37 aa).

Residues 5 to 25 (LLSGIVLGLIVVTLSGLFYAA) form a helical membrane-spanning segment.

This sequence belongs to the PetG family. The 4 large subunits of the cytochrome b6-f complex are cytochrome b6, subunit IV (17 kDa polypeptide, PetD), cytochrome f and the Rieske protein, while the 4 small subunits are PetG, PetL, PetM and PetN. The complex functions as a dimer.

Its subcellular location is the cellular thylakoid membrane. In terms of biological role, component of the cytochrome b6-f complex, which mediates electron transfer between photosystem II (PSII) and photosystem I (PSI), cyclic electron flow around PSI, and state transitions. PetG is required for either the stability or assembly of the cytochrome b6-f complex. This chain is Cytochrome b6-f complex subunit 5, found in Trichormus variabilis (strain ATCC 29413 / PCC 7937) (Anabaena variabilis).